The primary structure comprises 422 residues: Serine--tRNA ligase (422 aa).

230–232 (TAE) contacts L-serine. 261–263 (RAE) is a binding site for ATP. Glu-284 is a binding site for L-serine. Position 348 to 351 (348 to 351 (EISS)) interacts with ATP. Residue Ser-383 coordinates L-serine.

Belongs to the class-II aminoacyl-tRNA synthetase family. Type-1 seryl-tRNA synthetase subfamily. As to quaternary structure, homodimer. The tRNA molecule binds across the dimer.

It is found in the cytoplasm. It carries out the reaction tRNA(Ser) + L-serine + ATP = L-seryl-tRNA(Ser) + AMP + diphosphate + H(+). The enzyme catalyses tRNA(Sec) + L-serine + ATP = L-seryl-tRNA(Sec) + AMP + diphosphate + H(+). It participates in aminoacyl-tRNA biosynthesis; selenocysteinyl-tRNA(Sec) biosynthesis; L-seryl-tRNA(Sec) from L-serine and tRNA(Sec): step 1/1. Functionally, catalyzes the attachment of serine to tRNA(Ser). Is also able to aminoacylate tRNA(Sec) with serine, to form the misacylated tRNA L-seryl-tRNA(Sec), which will be further converted into selenocysteinyl-tRNA(Sec). The chain is Serine--tRNA ligase from Pelotomaculum thermopropionicum (strain DSM 13744 / JCM 10971 / SI).